The following is a 310-amino-acid chain: Thiamine-monophosphate kinase (310 aa).

Residues aspartate 26, threonine 40, serine 41, and aspartate 42 each coordinate Mg(2+). Aspartate 49 contacts substrate. Positions 70 and 118 each coordinate Mg(2+). Residues 117-118 and arginine 141 contribute to the ATP site; that span reads GD. Aspartate 202 is a binding site for Mg(2+). Serine 204 is a binding site for ATP. Residue aspartate 205 participates in Mg(2+) binding. Glutamate 251 and tryptophan 299 together coordinate substrate.

Belongs to the thiamine-monophosphate kinase family.

It catalyses the reaction thiamine phosphate + ATP = thiamine diphosphate + ADP. It functions in the pathway cofactor biosynthesis; thiamine diphosphate biosynthesis; thiamine diphosphate from thiamine phosphate: step 1/1. In terms of biological role, catalyzes the ATP-dependent phosphorylation of thiamine-monophosphate (TMP) to form thiamine-pyrophosphate (TPP), the active form of vitamin B1. This Pyrococcus abyssi (strain GE5 / Orsay) protein is Thiamine-monophosphate kinase.